The primary structure comprises 811 residues: Glycerol-3-phosphate acyltransferase (811 aa).

An HXXXXD motif motif is present at residues 303–308 (HRSHMD).

Belongs to the GPAT/DAPAT family.

The protein resides in the cell inner membrane. The catalysed reaction is sn-glycerol 3-phosphate + an acyl-CoA = a 1-acyl-sn-glycero-3-phosphate + CoA. The protein operates within phospholipid metabolism; CDP-diacylglycerol biosynthesis; CDP-diacylglycerol from sn-glycerol 3-phosphate: step 1/3. This is Glycerol-3-phosphate acyltransferase from Haemophilus ducreyi (strain 35000HP / ATCC 700724).